The primary structure comprises 881 residues: Cell wall protein PRY3 (881 aa).

The N-terminal stretch at 1 to 18 (MLEFPISVLLGCLVAVKA) is a signal peptide. The SCP domain maps to 30–144 (LNEHNKFRAL…TWNNYIVCSY (115 aa)). N-linked (GlcNAc...) asparagine glycosylation occurs at Asn-101. The interval 262-313 (VVSSDATSSTTTTSSVATSSSTTSSDPTSSTAAASSSDPASSSAAASSSAST) is disordered. Asn-360 is a glycosylation site (N-linked (GlcNAc...) asparagine). Disordered stretches follow at residues 381–400 (AADD…VSEH) and 453–494 (VSST…NSAA). The span at 386–400 (QGSTSKEATSSVSEH) shows a compositional bias: polar residues. N-linked (GlcNAc...) asparagine glycosylation is found at Asn-488, Asn-535, Asn-547, and Asn-569. The segment at 579–611 (IDPTLDPTDNSASPTDNAKHTSTYGSSSTGASL) is disordered. The segment covering 585–594 (PTDNSASPTD) has biased composition (polar residues). Residues 599–611 (TSTYGSSSTGASL) show a composition bias toward low complexity. N-linked (GlcNAc...) asparagine glycosylation is present at Asn-625. 2 disordered regions span residues 758–788 (LASD…TTTT) and 800–830 (PSST…MHQP). 2 stretches are compositionally biased toward low complexity: residues 776-788 (STSN…TTTT) and 808-820 (RTTT…STTS). Positions 821–830 (QQDGSAMHQP) are enriched in polar residues. Gly-853 is lipidated: GPI-anchor amidated glycine. Residues 854–881 (AATPLSIFQCNSLAGTIAAFVVAVLFAF) constitute a propeptide, removed in mature form.

This sequence belongs to the CRISP family. In terms of processing, the GPI-anchor is attached to the protein in the endoplasmic reticulum and serves to target the protein to the cell surface. There, the glucosamine-inositol phospholipid moiety is cleaved off and the GPI-modified mannoprotein is covalently attached via its lipidless GPI glycan remnant to the 1,6-beta-glucan of the outer cell wall layer.

The protein localises to the secreted. It localises to the cell wall. The protein resides in the membrane. Functionally, the full-length isoform (isoform Long) is a daughter cell-specific cell wall protein required for efficient export of lipids such as acetylated sterols. Acts in detoxification of hydrophobic compounds. Involved in tolerance to organic solvents such as dimethyl sulfoxide (DMSO). Also plays a role as an inhibitor of mating. STE12 is utilized as a repressor of full-length PRY3 transcription, ensuring efficient mating. In terms of biological role, there is no evidence that production of the short PRY3 transcript (isoform Short) is anything more than an adventitious by-product of the mechanism responsible for the repression of the full-length transcript. Moreover, no disadvantage is detectable for cells unable to make the short transcript. In Saccharomyces cerevisiae (strain ATCC 204508 / S288c) (Baker's yeast), this protein is Cell wall protein PRY3 (PRY3).